Here is a 110-residue protein sequence, read N- to C-terminus: Small ubiquitin-related modifier 3 (110 aa).

Glycyl lysine isopeptide (Lys-Gly) (interchain with G-Cter in SUMO2) cross-links involve residues Lys5 and Lys7. Lys11 is covalently cross-linked (Glycyl lysine isopeptide (Lys-Gly) (interchain with G-Cter in SUMO); alternate). Lys11 participates in a covalent cross-link: Glycyl lysine isopeptide (Lys-Gly) (interchain with G-Cter in SUMO2); alternate. Positions 15 to 92 (DHINLKVAGQ…IDVFQQQTGG (78 aa)) constitute a Ubiquitin-like domain. Residues 88–101 (QQTGGSASRGSVPT) are compositionally biased toward polar residues. A disordered region spans residues 88–110 (QQTGGSASRGSVPTPNRCPDLCY). Gly92 is covalently cross-linked (Glycyl lysine isopeptide (Gly-Lys) (interchain with K-? in acceptor proteins)). Positions 93 to 110 (SASRGSVPTPNRCPDLCY) are excised as a propeptide.

Belongs to the ubiquitin family. SUMO subfamily. In terms of assembly, interacts with SAE2 and UBE2I. Covalently attached to a number of proteins. Interacts with USP25 (via ts SIM domain); the interaction sumoylates USP25 and inhibits its ubiquitin hydrolyzing activity. Interacts with BMAL1. In terms of processing, polymeric chains can be formed through Lys-11 cross-linking. Post-translationally, cleavage of precursor form by SENP1, SENP2 or SENP5 is necessary for function.

It localises to the cytoplasm. It is found in the nucleus. The protein localises to the PML body. Functionally, ubiquitin-like protein which can be covalently attached to target lysines either as a monomer or as a lysine-linked polymer. Does not seem to be involved in protein degradation and may function as an antagonist of ubiquitin in the degradation process. Plays a role in a number of cellular processes such as nuclear transport, DNA replication and repair, mitosis and signal transduction. Covalent attachment to its substrates requires prior activation by the E1 complex SAE1-SAE2 and linkage to the E2 enzyme UBE2I, and can be promoted by an E3 ligase such as PIAS1-4, RANBP2 or CBX4. Plays a role in the regulation of sumoylation status of SETX. In Mus musculus (Mouse), this protein is Small ubiquitin-related modifier 3.